Reading from the N-terminus, the 96-residue chain is UPF0235 protein CKO_04329 (96 aa).

This sequence belongs to the UPF0235 family.

This is UPF0235 protein CKO_04329 from Citrobacter koseri (strain ATCC BAA-895 / CDC 4225-83 / SGSC4696).